The primary structure comprises 192 residues: Nucleosome assembly protein 1-like 5 (192 aa).

Over residues 1-12 the composition is skewed to polar residues; it reads MADSQNQGSAEP. The disordered stretch occupies residues 1-76; that stretch reads MADSQNQGSA…APKPRNDFIE (76 aa). Low complexity-rich tracts occupy residues 15–28 and 40–55; these read AAAAAAAADAAAAA and GDSDSASSDSDGVVGQ. A coiled-coil region spans residues 86-112; that stretch reads VLALKKLQKRCDKIEAKFDKEFQALEK. Positions 136 to 192 are disordered; the sequence is AWTLEGDEEDDDDDEYEDEEEGEEEDEEEEEPAAEAAGTAAAKDEGPHSAVPDDAKK. Residues 140-168 show a composition bias toward acidic residues; it reads EGDEEDDDDDEYEDEEEGEEEDEEEEEPA. Residues 177 to 192 are compositionally biased toward basic and acidic residues; the sequence is AKDEGPHSAVPDDAKK.

The protein belongs to the nucleosome assembly protein (NAP) family.

It is found in the nucleus. The sequence is that of Nucleosome assembly protein 1-like 5 (NAP1L5) from Bos taurus (Bovine).